We begin with the raw amino-acid sequence, 342 residues long: N-acetyl-gamma-glutamyl-phosphate reductase (342 aa).

The active site involves Cys-149.

Belongs to the NAGSA dehydrogenase family. Type 1 subfamily.

Its subcellular location is the cytoplasm. It catalyses the reaction N-acetyl-L-glutamate 5-semialdehyde + phosphate + NADP(+) = N-acetyl-L-glutamyl 5-phosphate + NADPH + H(+). It functions in the pathway amino-acid biosynthesis; L-arginine biosynthesis; N(2)-acetyl-L-ornithine from L-glutamate: step 3/4. Functionally, catalyzes the NADPH-dependent reduction of N-acetyl-5-glutamyl phosphate to yield N-acetyl-L-glutamate 5-semialdehyde. The chain is N-acetyl-gamma-glutamyl-phosphate reductase from Cereibacter sphaeroides (strain KD131 / KCTC 12085) (Rhodobacter sphaeroides).